A 363-amino-acid chain; its full sequence is Uptake hydrogenase small subunit (363 aa).

Residues 1–46 (MGAATETFYSVIRRQGITRRSFHKFCSLTATSLGLGPLAASRIANA) constitute a signal peptide (tat-type signal). Positions 63, 66, 161, 195, 233, 236, 261, and 267 each coordinate [4Fe-4S] cluster. Cys276, Cys295, and Cys298 together coordinate [3Fe-4S] cluster.

It belongs to the [NiFe]/[NiFeSe] hydrogenase small subunit family. Heterodimer of a large and a small subunit. It depends on [4Fe-4S] cluster as a cofactor. The cofactor is [3Fe-4S] cluster. In terms of processing, predicted to be exported by the Tat system. The position of the signal peptide cleavage has not been experimentally proven.

The protein localises to the cell membrane. It carries out the reaction H2 + A = AH2. This enzyme recycles the H(2) produced by nitrogenase to increase the production of ATP and to protect nitrogenase against inhibition or damage by O(2) under carbon- or phosphate-limited conditions. The sequence is that of Uptake hydrogenase small subunit (hupA) from Bradyrhizobium diazoefficiens (strain JCM 10833 / BCRC 13528 / IAM 13628 / NBRC 14792 / USDA 110).